Reading from the N-terminus, the 147-residue chain is Myoglobin (147 aa).

The Globin domain maps to 2 to 141 (ADFDAVLKFW…FIADMDANYK (140 aa)). H60 is a nitrite binding site. An O2-binding site is contributed by H60. Position 89 (H89) interacts with heme b.

The protein belongs to the globin family. In terms of assembly, monomeric.

It localises to the cytoplasm. It is found in the sarcoplasm. It carries out the reaction Fe(III)-heme b-[protein] + nitric oxide + H2O = Fe(II)-heme b-[protein] + nitrite + 2 H(+). The enzyme catalyses H2O2 + AH2 = A + 2 H2O. Monomeric heme protein which primary function is to store oxygen and facilitate its diffusion within muscle tissues. Reversibly binds oxygen through a pentacoordinated heme iron and enables its timely and efficient release as needed during periods of heightened demand. Depending on the oxidative conditions of tissues and cells, and in addition to its ability to bind oxygen, it also has a nitrite reductase activity whereby it regulates the production of bioactive nitric oxide. Under stress conditions, like hypoxia and anoxia, it also protects cells against reactive oxygen species thanks to its pseudoperoxidase activity. The protein is Myoglobin (mb) of Scomber japonicus (Chub mackerel).